Consider the following 933-residue polypeptide: Isoleucine--tRNA ligase (933 aa).

The 'HIGH' region signature appears at 57–67 (PYANGNIHVGH). An L-isoleucyl-5'-AMP-binding site is contributed by glutamate 554. A 'KMSKS' region motif is present at residues 595 to 599 (KMSKS). Lysine 598 is a binding site for ATP.

It belongs to the class-I aminoacyl-tRNA synthetase family. IleS type 1 subfamily. As to quaternary structure, monomer.

It is found in the cytoplasm. The catalysed reaction is tRNA(Ile) + L-isoleucine + ATP = L-isoleucyl-tRNA(Ile) + AMP + diphosphate. Functionally, catalyzes the attachment of isoleucine to tRNA(Ile). As IleRS can inadvertently accommodate and process structurally similar amino acids such as valine, to avoid such errors it has two additional distinct tRNA(Ile)-dependent editing activities. One activity is designated as 'pretransfer' editing and involves the hydrolysis of activated Val-AMP. The other activity is designated 'posttransfer' editing and involves deacylation of mischarged Val-tRNA(Ile). This chain is Isoleucine--tRNA ligase, found in Streptococcus pyogenes serotype M3 (strain ATCC BAA-595 / MGAS315).